We begin with the raw amino-acid sequence, 374 residues long: Flap endonuclease 1 (374 aa).

Positions 1–105 are N-domain; sequence MGIKGLTALI…ELLQKRFGRR (105 aa). Mg(2+) is bound at residue Asp-34. Positions 47 and 71 each coordinate DNA. Asp-87 lines the Mg(2+) pocket. The tract at residues 103–122 is disordered; that stretch reads GRREEAREQEEEQKDVADAE. The segment at 123 to 254 is I-domain; that stretch reads KMDQLARRQV…KTALKLIREH (132 aa). Mg(2+)-binding residues include Glu-159, Glu-161, Asp-180, and Asp-182. DNA is bound at residue Glu-159. Residues Gly-232 and Asp-234 each coordinate DNA. Asp-234 provides a ligand contact to Mg(2+). The disordered stretch occupies residues 335–374; sequence SLSQKQQGRLDGFFTVKPGSAPPKRKAEDDKKNVKKKGKK. An interaction with PCNA region spans residues 340–348; that stretch reads QQGRLDGFF.

It belongs to the XPG/RAD2 endonuclease family. FEN1 subfamily. As to quaternary structure, interacts with PCNA. Three molecules of FEN1 bind to one PCNA trimer with each molecule binding to one PCNA monomer. PCNA stimulates the nuclease activity without altering cleavage specificity. Requires Mg(2+) as cofactor. Phosphorylated. Phosphorylation upon DNA damage induces relocalization to the nuclear plasma.

It is found in the nucleus. Its subcellular location is the nucleolus. It localises to the nucleoplasm. The protein resides in the mitochondrion. Its function is as follows. Structure-specific nuclease with 5'-flap endonuclease and 5'-3' exonuclease activities involved in DNA replication and repair. During DNA replication, cleaves the 5'-overhanging flap structure that is generated by displacement synthesis when DNA polymerase encounters the 5'-end of a downstream Okazaki fragment. It enters the flap from the 5'-end and then tracks to cleave the flap base, leaving a nick for ligation. Also involved in the long patch base excision repair (LP-BER) pathway, by cleaving within the apurinic/apyrimidinic (AP) site-terminated flap. Acts as a genome stabilization factor that prevents flaps from equilibrating into structures that lead to duplications and deletions. Also possesses 5'-3' exonuclease activity on nicked or gapped double-stranded DNA, and exhibits RNase H activity. Also involved in replication and repair of rDNA and in repairing mitochondrial DNA. The sequence is that of Flap endonuclease 1 from Mycosarcoma maydis (Corn smut fungus).